The sequence spans 318 residues: Cis-3-alkyl-4-alkyloxetan-2-one decarboxylase (318 aa).

The 246-residue stretch at 30 to 275 folds into the AB hydrolase-1 domain; it reads PVVMVHGNPS…ADCGHYILED (246 aa).

The protein belongs to the AB hydrolase superfamily.

It carries out the reaction a cis-3-alkyl-4-alkyloxetan-2-one = a cis-alkene + CO2. Its function is as follows. Involved in olefin biosynthesis. Catalyzes the elimination of carbon dioxide from beta-lactones to form the final olefin product. The S.oneidensis oleABCD genes produce 3,6,9,12,15,19,22,25,28-hentriacontanonaene, which may aid the cells in adapting to a sudden drop in temperature. This chain is Cis-3-alkyl-4-alkyloxetan-2-one decarboxylase, found in Shewanella oneidensis (strain ATCC 700550 / JCM 31522 / CIP 106686 / LMG 19005 / NCIMB 14063 / MR-1).